The primary structure comprises 412 residues: MHGKLLPLAGLYLVQGLPYGLQSSLLPILLRARGLSLTRVGLTKGLYAPWLLKLAWAPLVDRRGTPRVWLTLSTLSLGLVCGLLAVLPPPQAGQTGLPTTVMGLLLLLNLGAAVQDVALDTLAVQLLEPKELGPGNTVQVVAYKLGSALAGGGLLVLFPTLSWPLLFLLLAATYWLAAALAWAAPALGRLPWPQASEHTPHSSYLLQDLLAVPGTLWTAGFVLTYKLGEQGAGSLFPLLLLDHGASASDLGLWSGLGAVTCSIAGSSLGGALLARHWQPLKLLKTVLQLRLGSLACQTALLFHLNSPGASVDPGTVMRGAVLLSLCLQQFFGGVVTTATFTVMMHCSQLAPRALQATHYSFLATLELLGKLLLGTLAGVLADSLGPHLCFAVFLVLSALPVLDLRLAPSNLT.

A run of 12 helical transmembrane segments spans residues 10 to 30 (GLYL…PILL), 40 to 60 (VGLT…APLV), 68 to 88 (VWLT…AVLP), 99 to 119 (TTVM…DVAL), 152 to 172 (GGLL…LLAA), 173 to 193 (TYWL…LPWP), 204 to 224 (YLLQ…FVLT), 252 to 272 (LWSG…GGAL), 291 to 311 (LGSL…GASV), 320 to 340 (AVLL…TATF), 361 to 381 (FLAT…GVLA), and 384 to 404 (LGPH…VLDL).

This sequence belongs to the major facilitator superfamily. In terms of tissue distribution, in brain, expressed in the cortex, striatum, hippocampus, hypothalamus, thalamus and cerebellum (at protein level). Widely expressed with highest levels in kidney and liver.

It is found in the membrane. The protein is Major facilitator superfamily domain-containing protein 3 (Mfsd3) of Mus musculus (Mouse).